A 352-amino-acid chain; its full sequence is Holliday junction branch migration complex subunit RuvB (352 aa).

The segment at 1 to 26 is disordered; the sequence is MIETDKLRAAAPERLISPQPADRQED. The segment at 4-193 is large ATPase domain (RuvB-L); it reads TDKLRAAAPE…FGIVSRLEFY (190 aa). ATP is bound by residues leucine 32, arginine 33, glycine 74, lysine 77, threonine 78, threonine 79, 140–142, arginine 183, tyrosine 193, and arginine 230; that span reads EDF. Residue threonine 78 participates in Mg(2+) binding. The interval 194-264 is small ATPAse domain (RuvB-S); the sequence is TPDELGFIVS…VADAALRMLD (71 aa). The head domain (RuvB-H) stretch occupies residues 267–352; that stretch reads SLGLDLMDRK…RPGGTDLFGG (86 aa). DNA is bound by residues arginine 322 and arginine 327.

It belongs to the RuvB family. Homohexamer. Forms an RuvA(8)-RuvB(12)-Holliday junction (HJ) complex. HJ DNA is sandwiched between 2 RuvA tetramers; dsDNA enters through RuvA and exits via RuvB. An RuvB hexamer assembles on each DNA strand where it exits the tetramer. Each RuvB hexamer is contacted by two RuvA subunits (via domain III) on 2 adjacent RuvB subunits; this complex drives branch migration. In the full resolvosome a probable DNA-RuvA(4)-RuvB(12)-RuvC(2) complex forms which resolves the HJ.

Its subcellular location is the cytoplasm. It catalyses the reaction ATP + H2O = ADP + phosphate + H(+). In terms of biological role, the RuvA-RuvB-RuvC complex processes Holliday junction (HJ) DNA during genetic recombination and DNA repair, while the RuvA-RuvB complex plays an important role in the rescue of blocked DNA replication forks via replication fork reversal (RFR). RuvA specifically binds to HJ cruciform DNA, conferring on it an open structure. The RuvB hexamer acts as an ATP-dependent pump, pulling dsDNA into and through the RuvAB complex. RuvB forms 2 homohexamers on either side of HJ DNA bound by 1 or 2 RuvA tetramers; 4 subunits per hexamer contact DNA at a time. Coordinated motions by a converter formed by DNA-disengaged RuvB subunits stimulates ATP hydrolysis and nucleotide exchange. Immobilization of the converter enables RuvB to convert the ATP-contained energy into a lever motion, pulling 2 nucleotides of DNA out of the RuvA tetramer per ATP hydrolyzed, thus driving DNA branch migration. The RuvB motors rotate together with the DNA substrate, which together with the progressing nucleotide cycle form the mechanistic basis for DNA recombination by continuous HJ branch migration. Branch migration allows RuvC to scan DNA until it finds its consensus sequence, where it cleaves and resolves cruciform DNA. This chain is Holliday junction branch migration complex subunit RuvB, found in Azoarcus sp. (strain BH72).